A 376-amino-acid polypeptide reads, in one-letter code: MKIVVDENMPYVEPLFGALGEIIPVNGRTLTPEQVQDADVLLVRSVTRVNAALLDANPKLKFVGSATIGTDHVDLAYLARRGIPFSNAPGCNATAVGEFAFIAMLELAARFNSPLKGKVVGIVGAGNTGSATAKCLEAYGIKVLLNDPIKAAEGDPRHFVSLETLLHQADIISLHVPITRSGEHKTLHLFDEARLMSLKPNTWLVNCCRGDVIDNQALIKVKQQRDDLKLVLDVWEGEPHPMPELVPFAEFATPHIAGYSLEGKARGTFMLYQKLCELLAIPANKRLSELLPPFHFKAVELEQTPDEKALLQLARFVYDLRDDDAVFRNGFAKENGFDIMRKNHKHRREFSALALAYHGQSEVDWLSNLGFSGVGR.

Substrate is bound by residues serine 45 and threonine 67. Aspartate 147 provides a ligand contact to NAD(+). Arginine 209 is an active-site residue. An NAD(+)-binding site is contributed by aspartate 233. Residue glutamate 238 is part of the active site. Histidine 255 acts as the Proton donor in catalysis. An NAD(+)-binding site is contributed by glycine 258. Tyrosine 259 lines the substrate pocket.

Belongs to the D-isomer specific 2-hydroxyacid dehydrogenase family. PdxB subfamily. In terms of assembly, homodimer.

The protein resides in the cytoplasm. The catalysed reaction is 4-phospho-D-erythronate + NAD(+) = (R)-3-hydroxy-2-oxo-4-phosphooxybutanoate + NADH + H(+). It participates in cofactor biosynthesis; pyridoxine 5'-phosphate biosynthesis; pyridoxine 5'-phosphate from D-erythrose 4-phosphate: step 2/5. Functionally, catalyzes the oxidation of erythronate-4-phosphate to 3-hydroxy-2-oxo-4-phosphonooxybutanoate. The sequence is that of Erythronate-4-phosphate dehydrogenase from Shewanella sp. (strain MR-4).